A 334-amino-acid chain; its full sequence is Malate dehydrogenase, cytoplasmic (334 aa).

Ser2 carries the post-translational modification N-acetylserine. NAD(+)-binding positions include 11-17 (GAAGQIA) and Asp42. 2 residues coordinate substrate: Arg92 and Arg98. Asn105 lines the NAD(+) pocket. Lys110 carries the N6-succinyllysine modification. Gln112 serves as a coordination point for NAD(+). 2 positions are modified to N6-acetyllysine: Lys118 and Lys121. Residue 129–131 (VGN) coordinates NAD(+). Residues Asn131 and Arg162 each contribute to the substrate site. Catalysis depends on His187, which acts as the Proton acceptor. Lys214 carries the post-translational modification N6-succinyllysine. Ser217 carries the post-translational modification Phosphoserine. At Arg230 the chain carries Omega-N-methylarginine. Residue Ser241 is modified to Phosphoserine. Residue Lys298 is modified to N6-acetyllysine; alternate. At Lys298 the chain carries N6-succinyllysine; alternate. Ser309 bears the Phosphoserine mark. Position 318 is an N6-succinyllysine (Lys318). Phosphoserine is present on residues Ser332 and Ser333.

Belongs to the LDH/MDH superfamily. MDH type 2 family. As to quaternary structure, homodimer. In terms of processing, ISGylated. Acetylation at Lys-118 dramatically enhances enzymatic activity and promotes adipogenic differentiation.

Its subcellular location is the cytoplasm. The protein localises to the cytosol. The enzyme catalyses (S)-malate + NAD(+) = oxaloacetate + NADH + H(+). It catalyses the reaction (2R)-2-hydroxy-3-(4-hydroxyphenyl)propanoate + NAD(+) = 3-(4-hydroxyphenyl)pyruvate + NADH + H(+). The catalysed reaction is (S)-2-hydroxyglutarate + NAD(+) = 2-oxoglutarate + NADH + H(+). Catalyzes the reduction of aromatic alpha-keto acids in the presence of NADH. Plays essential roles in the malate-aspartate shuttle and the tricarboxylic acid cycle, important in mitochondrial NADH supply for oxidative phosphorylation. Catalyzes the reduction of 2-oxoglutarate to 2-hydroxyglutarate, leading to elevated reactive oxygen species (ROS). This chain is Malate dehydrogenase, cytoplasmic (MDH1), found in Felis catus (Cat).